A 123-amino-acid polypeptide reads, in one-letter code: Nitrogen regulatory protein GlnK2 (123 aa).

ATP-binding positions include 38–40 (SLT) and serine 49. Residue serine 49 participates in ADP binding. The residue at position 62 (tyrosine 62) is an O-UMP-tyrosine. ATP-binding positions include valine 75, 98–101 (GDGK), and arginine 114. 98–101 (GDGK) provides a ligand contact to ADP. 98-101 (GDGK) provides a ligand contact to AMP.

The protein belongs to the P(II) protein family. As to quaternary structure, homotrimer. Interacts with the glutamine synthetase 3 (GS3) in the presence of 2-oxoglutarate. Interacts in vitro with Amt1 after ammonium shock. May also interact with Amt2. Uridylylated on Tyr-62.

It localises to the cytoplasm. With respect to regulation, binds the effectors ADP and ATP. Also binds AMP with high affinity, raising the possibility that AMP could be an important PII effector, at least in archaea. The change in the ATP/AMP ratio may be more relevant for describing the energy status in the cells than the ATP/ADP ratio alone. In terms of biological role, involved in the regulation of nitrogen metabolism. Regulates the activity of its targets by protein-protein interaction in response to the nitrogen status of the cell. Increases the activity of the glutamine synthetase 3 in the presence of 2-oxoglutarate. May regulate the activity of the ammonia channel Amt2 via direct interaction. The sequence is that of Nitrogen regulatory protein GlnK2 from Haloferax mediterranei (strain ATCC 33500 / DSM 1411 / JCM 8866 / NBRC 14739 / NCIMB 2177 / R-4) (Halobacterium mediterranei).